A 209-amino-acid chain; its full sequence is Large ribosomal subunit protein uL3 (209 aa).

Gln-150 bears the N5-methylglutamine mark.

This sequence belongs to the universal ribosomal protein uL3 family. In terms of assembly, part of the 50S ribosomal subunit. Forms a cluster with proteins L14 and L19. Methylated by PrmB.

Functionally, one of the primary rRNA binding proteins, it binds directly near the 3'-end of the 23S rRNA, where it nucleates assembly of the 50S subunit. This is Large ribosomal subunit protein uL3 from Cronobacter sakazakii (strain ATCC BAA-894) (Enterobacter sakazakii).